The sequence spans 117 residues: Large ribosomal subunit protein bL20 (117 aa).

This sequence belongs to the bacterial ribosomal protein bL20 family.

Its function is as follows. Binds directly to 23S ribosomal RNA and is necessary for the in vitro assembly process of the 50S ribosomal subunit. It is not involved in the protein synthesizing functions of that subunit. The polypeptide is Large ribosomal subunit protein bL20 (Natranaerobius thermophilus (strain ATCC BAA-1301 / DSM 18059 / JW/NM-WN-LF)).